Consider the following 274-residue polypeptide: Envelope glycoprotein L (274 aa).

The N-terminal stretch at 1-21 (MMPLLLLILLSTRNLLGAAQS) is a signal peptide. Positions 51–251 (VEHKCREALA…RSYRDRFPAV (201 aa)) constitute a gL betaherpesvirus-type domain. Cysteine 156 and cysteine 161 are joined by a disulfide.

The protein belongs to the herpesviridae glycoprotein L (gL) family. Betaherpesvirinae gL subfamily. Interacts with glycoprotein H (gH); this interaction is necessary for the correct processing and cell surface expression of gH.

It localises to the virion membrane. The protein resides in the host cell membrane. Its subcellular location is the host Golgi apparatus. It is found in the host trans-Golgi network. The heterodimer glycoprotein H-glycoprotein L is required for the fusion of viral and plasma membranes leading to virus entry into the host cell. Acts as a functional inhibitor of gH and maintains gH in an inhibited form. Upon binding to host integrins, gL dissociates from gH leading to activation of the viral fusion glycoproteins gB and gH. The chain is Envelope glycoprotein L from Mus musculus (Mouse).